We begin with the raw amino-acid sequence, 147 residues long: Myosin regulatory light chain (147 aa).

At threonine 1 the chain carries N-acetylthreonine. 3 consecutive EF-hand domains span residues 2 to 37, 73 to 108, and 109 to 144; these read ASADQIQECFQIFDKDNDGKVSIEELGSALRSLGKN, EQSKEMLDAFRALDKEGNGTIQEAELRQLLLNLGDA, and LTSSEVEELMKEVSVSGDGAINYESFVDMLVTGYPL. Ca(2+) is bound by residues aspartate 15, aspartate 17, aspartate 19, lysine 21, glutamate 26, aspartate 86, asparagine 90, threonine 92, and glutamate 97.

This is Myosin regulatory light chain from Physarum polycephalum (Slime mold).